The sequence spans 76 residues: DNA-directed RNA polymerase subunit epsilon (76 aa).

The protein belongs to the RNA polymerase subunit epsilon family. In terms of assembly, RNAP is composed of a core of 2 alpha, a beta and a beta' subunit. The core is associated with a delta subunit, and at least one of epsilon or omega. When a sigma factor is associated with the core the holoenzyme is formed, which can initiate transcription.

It carries out the reaction RNA(n) + a ribonucleoside 5'-triphosphate = RNA(n+1) + diphosphate. In terms of biological role, a non-essential component of RNA polymerase (RNAP). The chain is DNA-directed RNA polymerase subunit epsilon from Streptococcus pyogenes serotype M1.